A 336-amino-acid chain; its full sequence is Zinc transporter ZIP11 (336 aa).

The next 7 helical transmembrane spans lie at Leu12–Phe32, Leu44–Ile64, Ser75–Ala95, Ile188–Val208, Trp258–Ile278, Leu280–Val300, and Leu316–Gly336.

Belongs to the ZIP transporter (TC 2.A.5) family.

Its subcellular location is the cell membrane. It is found in the nucleus. The protein resides in the cytoplasm. The protein localises to the golgi apparatus. In terms of biological role, functions as a cellular zinc transporter. This chain is Zinc transporter ZIP11 (slc39a11), found in Xenopus tropicalis (Western clawed frog).